The following is a 138-amino-acid chain: Small ribosomal subunit protein uS12 (138 aa).

The interval 1–20 (MPTISQLINHGRSAKTSKSK) is disordered. At aspartate 102 the chain carries 3-methylthioaspartic acid. The disordered stretch occupies residues 116 to 138 (DAAGVDKRKQGRSIYGTKKPKEN).

This sequence belongs to the universal ribosomal protein uS12 family. As to quaternary structure, part of the 30S ribosomal subunit. Contacts proteins S8 and S17. May interact with IF1 in the 30S initiation complex.

With S4 and S5 plays an important role in translational accuracy. Its function is as follows. Interacts with and stabilizes bases of the 16S rRNA that are involved in tRNA selection in the A site and with the mRNA backbone. Located at the interface of the 30S and 50S subunits, it traverses the body of the 30S subunit contacting proteins on the other side and probably holding the rRNA structure together. The combined cluster of proteins S8, S12 and S17 appears to hold together the shoulder and platform of the 30S subunit. The sequence is that of Small ribosomal subunit protein uS12 from Metamycoplasma arthritidis (strain 158L3-1) (Mycoplasma arthritidis).